A 122-amino-acid polypeptide reads, in one-letter code: Large ribosomal subunit protein uL18 (122 aa).

The disordered stretch occupies residues 1–25; it reads MSTLSRKQQTQKRHRRLRRHLSGTA. The segment covering 9–21 has biased composition (basic residues); that stretch reads QTQKRHRRLRRHL.

This sequence belongs to the universal ribosomal protein uL18 family. Part of the 50S ribosomal subunit; part of the 5S rRNA/L5/L18/L25 subcomplex. Contacts the 5S and 23S rRNAs.

This is one of the proteins that bind and probably mediate the attachment of the 5S RNA into the large ribosomal subunit, where it forms part of the central protuberance. The sequence is that of Large ribosomal subunit protein uL18 from Synechococcus sp. (strain CC9311).